A 155-amino-acid polypeptide reads, in one-letter code: Ribosome maturation factor RimP (155 aa).

The protein belongs to the RimP family.

The protein localises to the cytoplasm. Its function is as follows. Required for maturation of 30S ribosomal subunits. The chain is Ribosome maturation factor RimP from Salinibacter ruber (strain DSM 13855 / M31).